A 351-amino-acid chain; its full sequence is Translation initiation factor eIF2B subunit beta (351 aa).

Belongs to the eIF-2B alpha/beta/delta subunits family. In terms of assembly, component of the translation initiation factor 2B (eIF2B) complex which is a heterodecamer of two sets of five different subunits: alpha, beta, gamma, delta and epsilon. Subunits alpha, beta and delta comprise a regulatory subcomplex and subunits epsilon and gamma comprise a catalytic subcomplex. Within the complex, the hexameric regulatory complex resides at the center, with the two heterodimeric catalytic subcomplexes bound on opposite sides.

It localises to the cytoplasm. Its subcellular location is the cytosol. Activated by the chemical integrated stress response (ISR) inhibitor ISRIB which stimulates guanine nucleotide exchange factor activity for both phosphorylated and unphosphorylated eIF2. Its function is as follows. Acts as a component of the translation initiation factor 2B (eIF2B) complex, which catalyzes the exchange of GDP for GTP on eukaryotic initiation factor 2 (eIF2) gamma subunit. Its guanine nucleotide exchange factor activity is repressed when bound to eIF2 complex phosphorylated on the alpha subunit, thereby limiting the amount of methionyl-initiator methionine tRNA available to the ribosome and consequently global translation is repressed. The chain is Translation initiation factor eIF2B subunit beta (EIF2B2) from Oryctolagus cuniculus (Rabbit).